The chain runs to 94 residues: Co-chaperonin GroES (94 aa).

Belongs to the GroES chaperonin family. In terms of assembly, heptamer of 7 subunits arranged in a ring. Interacts with the chaperonin GroEL.

The protein resides in the cytoplasm. Together with the chaperonin GroEL, plays an essential role in assisting protein folding. The GroEL-GroES system forms a nano-cage that allows encapsulation of the non-native substrate proteins and provides a physical environment optimized to promote and accelerate protein folding. GroES binds to the apical surface of the GroEL ring, thereby capping the opening of the GroEL channel. The protein is Co-chaperonin GroES of Streptococcus pneumoniae (strain ATCC BAA-255 / R6).